The primary structure comprises 462 residues: Protein Tube (462 aa).

The region spanning 27–152 (YSRNTELRRV…SAADFVALDF (126 aa)) is the Death domain. The tract at residues 218–265 (RDKSVPQPSGNTPPIAPPRRQQRSTTNSNFATLTGTGTTSTTIPNVPN) is disordered. Over residues 249–259 (TLTGTGTTSTT) the composition is skewed to low complexity. 2 tandem repeats follow at residues 262–269 (NVPNLTIL) and 286–293 (NIPDLSIL). The interval 262 to 460 (NVPNLTILNP…ACNIPDLSEL (199 aa)) is 5 X approximate repeats. Positions 301–317 (RATVSDNPSNRTSSTDP) are enriched in polar residues. The disordered stretch occupies residues 301-462 (RATVSDNPSN…NIPDLSELQQ (162 aa)). Residues 319 to 326 (NIPRITLL) form repeat 3. Residues 342-354 (AKASTATTSTASS) are compositionally biased toward low complexity. The span at 355–367 (NNLPMISALNISK) shows a compositional bias: polar residues. Repeat unit 4 spans residues 356 to 363 (NLPMISAL). Residues 368–377 (GSRETLRPES) are compositionally biased toward basic and acidic residues. Residues 387 to 403 (DDDDDNDGEEDGEEEYP) are compositionally biased toward acidic residues. Residues 409 to 424 (NLSNSEQQSSNNDSSL) are compositionally biased toward low complexity. Over residues 425–438 (TTVTGTSGDNSFEL) the composition is skewed to polar residues. Residues 439-449 (TNDSSSTSNDD) are compositionally biased toward low complexity. Residues 453–460 (NIPDLSEL) form repeat 5.

In terms of assembly, interacts (via Death domain) with pll (via Death domain). In terms of processing, phosphorylated by pll.

The protein localises to the cytoplasm. It is found in the cell membrane. Its function is as follows. Plays an essential role in the Tl receptor signaling pathway that establishes embryonic dorsoventral polarity; the signal directs import of dl into ventral and ventrolateral nuclei, thereby establishing dorsoventral polarity. Tub recruits pll to the plasma membrane and protein-protein interaction activates pll. Also has a role in pupal pattern formation. The chain is Protein Tube (tub) from Drosophila melanogaster (Fruit fly).